The sequence spans 569 residues: Protein Noxp20 (569 aa).

Disordered stretches follow at residues 1–87 (MSDD…GEVT), 102–126 (GDTGSEIPLKEQDDAAVDPSSQAGR), and 165–208 (ANSA…GSRG). At Thr197 the chain carries Phosphothreonine. Residue Ser262 is modified to Phosphoserine. The disordered stretch occupies residues 404–439 (VSIDVAKGSEEEEKEEGKEEKAEEPEEDKTGGQGAK).

The protein belongs to the FAM114 family. In terms of tissue distribution, over-expressed in brain. Also detected in lung, stomach, and in a lower extent in testis and thymus.

Its subcellular location is the cytoplasm. May play a role in neuronal cell development. This chain is Protein Noxp20 (Fam114a1), found in Mus musculus (Mouse).